Reading from the N-terminus, the 89-residue chain is MALSTEQKKSILAEYGLHETDTGSPEAQVALLSARINQLTEHLKFHKHDHHSRRGLLLLVGRRKGLLKYLADNNVDRYRDLIARLGLRR.

This sequence belongs to the universal ribosomal protein uS15 family. Part of the 30S ribosomal subunit. Forms a bridge to the 50S subunit in the 70S ribosome, contacting the 23S rRNA.

Its function is as follows. One of the primary rRNA binding proteins, it binds directly to 16S rRNA where it helps nucleate assembly of the platform of the 30S subunit by binding and bridging several RNA helices of the 16S rRNA. Forms an intersubunit bridge (bridge B4) with the 23S rRNA of the 50S subunit in the ribosome. The protein is Small ribosomal subunit protein uS15 of Corynebacterium diphtheriae (strain ATCC 700971 / NCTC 13129 / Biotype gravis).